We begin with the raw amino-acid sequence, 358 residues long: Trace amine-associated receptor 7a (358 aa).

The Extracellular portion of the chain corresponds to 1–47 (MDKLVDHFLSDQSRTMNEDLFSATSTELCYENLNRSCVRSPYSPGPR). An N-linked (GlcNAc...) asparagine glycan is attached at Asn-34. Cystine bridges form between Cys-37–Cys-201 and Cys-120–Cys-205. A helical transmembrane segment spans residues 48-68 (LILYAVFGFGAALAVCGNLLV). Residues 69-83 (MTSILHFRQLHSPAN) are Cytoplasmic-facing. The chain crosses the membrane as a helical span at residues 84–104 (FLVASLACADFLVGLTVMPFS). Residues 105–121 (TVRSVEGCWYFGESYCK) are Extracellular-facing. The chain crosses the membrane as a helical span at residues 122-143 (FHSCFEGSFCYSSIFHLCFISV). The Cytoplasmic segment spans residues 144-166 (DRYIAVSDPLTYPTRFTASVSGK). The helical transmembrane segment at 167-187 (CITFSWLLSIIYSFSLLYTGA) threads the bilayer. Topologically, residues 188–212 (NEAGLEDLVSVLTCVGGCQIAVNQS) are extracellular. The N-linked (GlcNAc...) asparagine glycan is linked to Asn-210. The chain crosses the membrane as a helical span at residues 213–233 (WVFINFLLFLIPTLVMMTVYS). At 234 to 274 (KIFLIAKQQAQNIEKMSKQTARASESYKDRVAKRERKAAKT) the chain is on the cytoplasmic side. Residues 275–295 (LGIAVAAFLLSWLPYFIDSII) form a helical membrane-spanning segment. Over 296-309 (DAFLGFITPTYVYE) the chain is Extracellular. The helical transmembrane segment at 310–333 (ILVWIAYYNSAMNPLIYAFFYPWF) threads the bilayer. Residues 334–358 (RKAIKLIVTGKILRENSSTTNLFPE) lie on the Cytoplasmic side of the membrane.

It belongs to the G-protein coupled receptor 1 family. As to expression, specifically expressed in neurons of the olfactory epithelium.

It localises to the cell membrane. In terms of biological role, olfactory receptor specific for N,N-dimethylalkylamines trace amines. Trace amine compounds are enriched in animal body fluids and act on trace amine-associated receptors (TAARs) to elicit both intraspecific and interspecific innate behaviors. Ligand-binding causes a conformation change that triggers signaling via G(s)-class of G alpha proteins (GNAL or GNAS). This chain is Trace amine-associated receptor 7a, found in Mus musculus (Mouse).